Consider the following 201-residue polypeptide: Protein GrpE (201 aa).

Residues 1 to 32 (MTDRDRQPEDTTAPTGEPVVSKPYIMPDDPEP) are disordered.

The protein belongs to the GrpE family. As to quaternary structure, homodimer.

It is found in the cytoplasm. In terms of biological role, participates actively in the response to hyperosmotic and heat shock by preventing the aggregation of stress-denatured proteins, in association with DnaK and GrpE. It is the nucleotide exchange factor for DnaK and may function as a thermosensor. Unfolded proteins bind initially to DnaJ; upon interaction with the DnaJ-bound protein, DnaK hydrolyzes its bound ATP, resulting in the formation of a stable complex. GrpE releases ADP from DnaK; ATP binding to DnaK triggers the release of the substrate protein, thus completing the reaction cycle. Several rounds of ATP-dependent interactions between DnaJ, DnaK and GrpE are required for fully efficient folding. The chain is Protein GrpE from Bradyrhizobium diazoefficiens (strain JCM 10833 / BCRC 13528 / IAM 13628 / NBRC 14792 / USDA 110).